Consider the following 345-residue polypeptide: KH domain-containing, RNA-binding, signal transduction-associated protein 2 (345 aa).

The region spanning 65-131 is the KH domain; it reads LIPVKQYPKF…AKHAHLSDEL (67 aa). 2 disordered regions span residues 178–224 and 321–345; these read LNGS…TRGA and SRST…YGRY. A compositionally biased stretch (basic and acidic residues) spans 336 to 345; the sequence is GYREHPYGRY.

This sequence belongs to the KHDRBS family.

It localises to the nucleus. Functionally, RNA-binding protein that plays a role in the regulation of alternative splicing. The sequence is that of KH domain-containing, RNA-binding, signal transduction-associated protein 2 (khdrbs2) from Xenopus tropicalis (Western clawed frog).